A 201-amino-acid chain; its full sequence is Large ribosomal subunit protein uL4 (201 aa).

The interval 39-72 (KRQGTSAQKSRSEVIGSGKKPWRQKGTGRARAGS) is disordered.

It belongs to the universal ribosomal protein uL4 family. Part of the 50S ribosomal subunit.

Functionally, one of the primary rRNA binding proteins, this protein initially binds near the 5'-end of the 23S rRNA. It is important during the early stages of 50S assembly. It makes multiple contacts with different domains of the 23S rRNA in the assembled 50S subunit and ribosome. Its function is as follows. Forms part of the polypeptide exit tunnel. This is Large ribosomal subunit protein uL4 from Wigglesworthia glossinidia brevipalpis.